A 65-amino-acid polypeptide reads, in one-letter code: uncharacterized protein (65 aa).

The helical transmembrane segment at 37-57 (ILAIMTSVLPVLLIYIIWIFI) threads the bilayer.

It localises to the cell membrane. This is an uncharacterized protein from Bacillus subtilis (strain 168).